A 303-amino-acid chain; its full sequence is Acetaldehyde dehydrogenase 1 (303 aa).

Cysteine 130 acts as the Acyl-thioester intermediate in catalysis. NAD(+) is bound by residues 161–169 and asparagine 272; that span reads SVGPGTRKN.

This sequence belongs to the acetaldehyde dehydrogenase family.

The catalysed reaction is acetaldehyde + NAD(+) + CoA = acetyl-CoA + NADH + H(+). This Methylibium petroleiphilum (strain ATCC BAA-1232 / LMG 22953 / PM1) protein is Acetaldehyde dehydrogenase 1.